We begin with the raw amino-acid sequence, 363 residues long: NADH-quinone oxidoreductase subunit H (363 aa).

10 helical membrane passes run 29–49, 62–82, 94–114, 127–147, 166–186, 202–222, 239–257, 264–286, 293–313, and 339–359; these read VLKILMIAIPLIVSVAFYVVW, GPMYVGMGLFQAFADVFKLLF, AIFVIAPLLTLAPSFAAWAVV, VGLLYLLAMTSLGVYGIILAG, VVSYEIAMGFALVGVMIAAGS, FFDWFLIPLFPLFIVYWVSGV, IVAGHMVEYSGSVFALFFL, ILVSFLISIFFLGGWLSPIQGWV, LIDWVWNGGWPWLLLKVLFFA, and FIPLTIVWIAVTALMVFSGVI.

This sequence belongs to the complex I subunit 1 family. NDH-1 is composed of 14 different subunits. Subunits NuoA, H, J, K, L, M, N constitute the membrane sector of the complex.

Its subcellular location is the cell inner membrane. The enzyme catalyses a quinone + NADH + 5 H(+)(in) = a quinol + NAD(+) + 4 H(+)(out). NDH-1 shuttles electrons from NADH, via FMN and iron-sulfur (Fe-S) centers, to quinones in the respiratory chain. The immediate electron acceptor for the enzyme in this species is believed to be ubiquinone. Couples the redox reaction to proton translocation (for every two electrons transferred, four hydrogen ions are translocated across the cytoplasmic membrane), and thus conserves the redox energy in a proton gradient. This subunit may bind ubiquinone. This Xylella fastidiosa (strain Temecula1 / ATCC 700964) protein is NADH-quinone oxidoreductase subunit H.